The following is a 576-amino-acid chain: Proline--tRNA ligase (576 aa).

It belongs to the class-II aminoacyl-tRNA synthetase family. ProS type 1 subfamily. As to quaternary structure, homodimer.

It is found in the cytoplasm. It catalyses the reaction tRNA(Pro) + L-proline + ATP = L-prolyl-tRNA(Pro) + AMP + diphosphate. In terms of biological role, catalyzes the attachment of proline to tRNA(Pro) in a two-step reaction: proline is first activated by ATP to form Pro-AMP and then transferred to the acceptor end of tRNA(Pro). As ProRS can inadvertently accommodate and process non-cognate amino acids such as alanine and cysteine, to avoid such errors it has two additional distinct editing activities against alanine. One activity is designated as 'pretransfer' editing and involves the tRNA(Pro)-independent hydrolysis of activated Ala-AMP. The other activity is designated 'posttransfer' editing and involves deacylation of mischarged Ala-tRNA(Pro). The misacylated Cys-tRNA(Pro) is not edited by ProRS. This Bordetella parapertussis (strain 12822 / ATCC BAA-587 / NCTC 13253) protein is Proline--tRNA ligase.